Here is a 293-residue protein sequence, read N- to C-terminus: Protease HtpX (293 aa).

The next 2 membrane-spanning stretches (helical) occupy residues 4–24 (IALF…VLSL) and 34–54 (GLMI…LLMS). Histidine 139 is a Zn(2+) binding site. Glutamate 140 is an active-site residue. Histidine 143 provides a ligand contact to Zn(2+). 2 helical membrane-spanning segments follow: residues 158–178 (VVNT…AGFL) and 193–213 (MVYF…ASII). Glutamate 222 lines the Zn(2+) pocket.

This sequence belongs to the peptidase M48B family. Requires Zn(2+) as cofactor.

Its subcellular location is the cell inner membrane. The protein is Protease HtpX of Yersinia pseudotuberculosis serotype O:1b (strain IP 31758).